The following is a 367-amino-acid chain: ELAV-like protein 3 (367 aa).

3 RRM domains span residues 39–117 (TNLI…YARP), 125–205 (ANLY…FANN), and 284–362 (WCIF…FKTS).

The protein belongs to the RRM elav family. Interacts with MAP1B light chain LC1. In terms of tissue distribution, brain specific. Expressed in the hippocampus with expression in CA1, CA3 and dentate gyrus.

Its function is as follows. RNA-binding protein that binds to AU-rich element (ARE) sequences of target mRNAs, including VEGF mRNA. May also bind poly-A tracts via RRM 3. May be involved in neuronal differentiation and maintenance. Plays a role in the stabilization of GAP43 mRNA and in spatial learning. In Mus musculus (Mouse), this protein is ELAV-like protein 3 (Elavl3).